The sequence spans 877 residues: Leucine--tRNA ligase (877 aa).

Positions 50-60 (PYPSGKLHMGH) match the 'HIGH' region motif. The 'KMSKS' region signature appears at 634-638 (KMSKS). Position 637 (lysine 637) interacts with ATP.

This sequence belongs to the class-I aminoacyl-tRNA synthetase family.

It is found in the cytoplasm. It carries out the reaction tRNA(Leu) + L-leucine + ATP = L-leucyl-tRNA(Leu) + AMP + diphosphate. The protein is Leucine--tRNA ligase of Hydrogenovibrio crunogenus (strain DSM 25203 / XCL-2) (Thiomicrospira crunogena).